Here is a 66-residue protein sequence, read N- to C-terminus: U-limacoditoxin(59)-Dv128 (66 aa).

The first 20 residues, 1 to 20 (MRHLLVLLLICLSVIAMAQA), serve as a signal peptide directing secretion. The interval 21–66 (TFGGGLGGAVGGRRRRDIGGGLGGAVGGRRRRDIGGGLGGAVGGKS) is 3 X 16 AA tandem repeats of [FI]-G-G-G-L-G-G-A-V-G-G-R-R-R-R-D. A run of 2 repeats spans residues 22-37 (FGGGLGGAVGGRRRRD) and 38-53 (IGGGLGGAVGGRRRRD). Glycine amide is present on glycine 31. A propeptide spanning residues 33–37 (RRRRD) is cleaved from the precursor. Glycine 47 is subject to Glycine amide. The propeptide occupies 49–53 (RRRRD). Residues 54-64 (IGGGLGGAVGG) form a 3; half-length repeat.

The protein belongs to the limacoditoxin-59 family. Expressed by the venom secretory cell of the spine. The spine is a cuticular structure containing a single large nucleated venom-secreting cell at its base. It is an independent unit capable of producing, storing and injecting venom. On the back of D.vulnerans caterpillars, spines are grouped together by 50 to 100 to form scoli, of which there are eight in D.vulnerans.

The protein localises to the secreted. Functionally, probable toxin. This chain is U-limacoditoxin(59)-Dv128, found in Doratifera vulnerans (Mottled cup moth).